The chain runs to 219 residues: MKNAAIIAAAGSGKRFGSRVSKQFLNLSGKPVFLWSVEAFASIKSFKQIIVVVPSDMVEFLSLKYKTGFVCATGGNERFDSVKNGLALVGDDIDFIAVHDASRPLISKKDILLVLEKAAKTKVAVAVEKAKDTVKLVSADGYILKTLDRTILRNAQTPQIFKTELLKRAYSRKMSAGTTDDSQLVENLKIKVSAVETKFLNFKITTKQDFELAEKILKS.

The protein belongs to the IspD/TarI cytidylyltransferase family. IspD subfamily.

The enzyme catalyses 2-C-methyl-D-erythritol 4-phosphate + CTP + H(+) = 4-CDP-2-C-methyl-D-erythritol + diphosphate. Its pathway is isoprenoid biosynthesis; isopentenyl diphosphate biosynthesis via DXP pathway; isopentenyl diphosphate from 1-deoxy-D-xylulose 5-phosphate: step 2/6. In terms of biological role, catalyzes the formation of 4-diphosphocytidyl-2-C-methyl-D-erythritol from CTP and 2-C-methyl-D-erythritol 4-phosphate (MEP). This is 2-C-methyl-D-erythritol 4-phosphate cytidylyltransferase from Endomicrobium trichonymphae.